The sequence spans 686 residues: ATP-dependent zinc metalloprotease FTSH 1, chloroplastic (686 aa).

The transit peptide at 1–16 (MAPPCSISSASHLLIT) directs the protein to the chloroplast. A helical membrane pass occupies residues 173–193 (FLAFVGNLLFPFLAFAGLFFL). 272–279 (GPPGTGKT) is an ATP binding site. His494 is a Zn(2+) binding site. Glu495 is an active-site residue. The Zn(2+) site is built by His498 and Asp575.

It in the N-terminal section; belongs to the AAA ATPase family. This sequence in the C-terminal section; belongs to the peptidase M41 family. The cofactor is Zn(2+).

It localises to the plastid. It is found in the chloroplast thylakoid membrane. Its function is as follows. Probable ATP-dependent zinc metallopeptidase. The sequence is that of ATP-dependent zinc metalloprotease FTSH 1, chloroplastic (FTSH1) from Oryza sativa subsp. japonica (Rice).